Consider the following 211-residue polypeptide: Cytidylate kinase (211 aa).

An ATP-binding site is contributed by 7-15 (GPAASGKGT).

The protein belongs to the cytidylate kinase family. Type 1 subfamily.

Its subcellular location is the cytoplasm. It carries out the reaction CMP + ATP = CDP + ADP. The enzyme catalyses dCMP + ATP = dCDP + ADP. In Rhodopseudomonas palustris (strain BisA53), this protein is Cytidylate kinase.